The following is a 230-amino-acid chain: Large ribosomal subunit protein uL1 (230 aa).

Belongs to the universal ribosomal protein uL1 family. Part of the 50S ribosomal subunit.

Its function is as follows. Binds directly to 23S rRNA. The L1 stalk is quite mobile in the ribosome, and is involved in E site tRNA release. Protein L1 is also a translational repressor protein, it controls the translation of the L11 operon by binding to its mRNA. The sequence is that of Large ribosomal subunit protein uL1 from Ligilactobacillus salivarius (strain UCC118) (Lactobacillus salivarius).